The chain runs to 461 residues: Zinc transporter 6 (461 aa).

The Cytoplasmic portion of the chain corresponds to 1–33 (MGTIHLFRKPQRSFFGKLLQEFRLVAADRRSWK). Residues 34 to 54 (ILLFGAINLTCTGFLLMWCSS) form a helical membrane-spanning segment. The Extracellular segment spans residues 55 to 64 (TNSIALTAYT). A helical transmembrane segment spans residues 65–85 (YLTIFDLFSLITCLVSYWVMM). The Cytoplasmic segment spans residues 86–98 (RKPSPAYSFGFER). Residues 99–119 (LEVLAVFASTVLAQLGALFIL) form a helical membrane-spanning segment. Topologically, residues 120-134 (KESAERFLEQPEIHT) are extracellular. A helical membrane pass occupies residues 135-155 (GRLLVGTFVALSFNLFTMLSI). At 156–200 (RNKPFAYVSEAASTSWLQEHVADLSRSLCGIIPGLSSIFLPRMNP) the chain is on the cytoplasmic side. Residues 201–221 (FVLIDLAGAFALCITYMLIEI) form a helical membrane-spanning segment. At 222 to 223 (NN) the chain is on the extracellular side. A helical transmembrane segment spans residues 224–244 (YFAVDTASAIAIALMTFGTMY). At 245–461 (PMSVYSGKVL…TNNRIGQPRP (217 aa)) the chain is on the cytoplasmic side. Positions 362–393 (PPLKGTDDSNPVTSTPTKPSSPPPEFSFNTPG) are disordered. Residues 370-379 (SNPVTSTPTK) are compositionally biased toward low complexity.

It belongs to the cation diffusion facilitator (CDF) transporter (TC 2.A.4) family. SLC30A subfamily. As to quaternary structure, heterodimer with SLC30A5; form a functional zinc ion transmembrane transporter.

The protein resides in the golgi apparatus. The protein localises to the trans-Golgi network membrane. Functionally, has probably no intrinsic transporter activity but together with SLC30A5 forms a functional zinc ion:proton antiporter heterodimer, mediating zinc entry into the lumen of organelles along the secretory pathway. As part of that zinc ion:proton antiporter, contributes to zinc ion homeostasis within the early secretory pathway and regulates the activation and folding of enzymes like alkaline phosphatases and enzymes involved in phosphatidylinositol glycan anchor biosynthesis. The sequence is that of Zinc transporter 6 (SLC30A6) from Bos taurus (Bovine).